A 253-amino-acid polypeptide reads, in one-letter code: Bridging integrator 3 (253 aa).

The BAR domain occupies 9–232 (GQPKKQIVSK…LDQPGHSDEH (224 aa)). 2 coiled-coil regions span residues 16 to 57 (VSKT…AMSK) and 120 to 151 (SLNMAVKRREQALQDYGRLQAKVEKYEEKEKT).

The protein localises to the cytoplasm. It localises to the cytoskeleton. In terms of biological role, involved in cytokinesis and septation where it has a role in the localization of F-actin. This Rattus norvegicus (Rat) protein is Bridging integrator 3 (Bin3).